The sequence spans 124 residues: Small ribosomal subunit protein uS13 (124 aa).

The interval 94-124 is disordered; that stretch reads GLPLRGQRTKNNSRTRKGKRKTVANKKKATK. Residues 100–124 are compositionally biased toward basic residues; the sequence is QRTKNNSRTRKGKRKTVANKKKATK.

It belongs to the universal ribosomal protein uS13 family. In terms of assembly, part of the 30S ribosomal subunit. Forms a loose heterodimer with protein S19. Forms two bridges to the 50S subunit in the 70S ribosome.

Its function is as follows. Located at the top of the head of the 30S subunit, it contacts several helices of the 16S rRNA. In the 70S ribosome it contacts the 23S rRNA (bridge B1a) and protein L5 of the 50S subunit (bridge B1b), connecting the 2 subunits; these bridges are implicated in subunit movement. Contacts the tRNAs in the A and P-sites. This chain is Small ribosomal subunit protein uS13, found in Flavobacterium johnsoniae (strain ATCC 17061 / DSM 2064 / JCM 8514 / BCRC 14874 / CCUG 350202 / NBRC 14942 / NCIMB 11054 / UW101) (Cytophaga johnsonae).